The chain runs to 1336 residues: Lysine-specific demethylase 2B (1336 aa).

The disordered stretch occupies residues 1-25 (MAGPQMGGSAEDHPPRKRHAAEKQK). Over residues 15–25 (PRKRHAAEKQK) the composition is skewed to basic residues. Phosphoserine is present on serine 57. Residues 178–346 (FSHTKLEHLV…MQLRIYEIED (169 aa)) form the JmjC domain. Substrate is bound at residue threonine 239. Fe cation is bound by residues histidine 242 and aspartate 244. Lysine 259 provides a ligand contact to substrate. Residue histidine 314 coordinates Fe cation. Positions 410–430 (MEEEACDQQPQEEEEKDEEGE) are enriched in acidic residues. The segment at 410-465 (MEEEACDQQPQEEEEKDEEGEGRDRAPKPPTDGSTSPTSTPSEDQEALGKKPKAPA) is disordered. Over residues 440–451 (TDGSTSPTSTPS) the composition is skewed to low complexity. Phosphoserine is present on residues serine 474 and serine 477. Position 493 is a phosphothreonine (threonine 493). Serine 497 is modified (phosphoserine). The segment at 606-652 (ARRRRTRCRKCEACLRTECGECHFCKDMKKFGGPGRMKQSCIMRQCI) adopts a CXXC-type zinc-finger fold. Zn(2+) is bound by residues cysteine 613, cysteine 616, cysteine 619, cysteine 624, cysteine 627, cysteine 630, cysteine 646, cysteine 651, cysteine 662, cysteine 665, cysteine 688, cysteine 691, histidine 696, cysteine 699, cysteine 719, and cysteine 722. The segment at 659 to 725 (TAVCLVCGEA…CWECPKCNHA (67 aa)) adopts a PHD-type zinc-finger fold. 2 disordered regions span residues 727 to 843 (KTGK…SLSP) and 855 to 1034 (QLKP…SPPK). Residues 749 to 799 (KEQKMNRDNKEGQEPAKRRSECEEAPRRRSDEHSKKVPPDGLLRRKSDDVH) show a composition bias toward basic and acidic residues. A compositionally biased stretch (low complexity) spans 819–843 (SSLQTSPGSSSHLSPRPPLGSSLSP). Residues lysine 857 and lysine 890 each participate in a glycyl lysine isopeptide (Lys-Gly) (interchain with G-Cter in SUMO2) cross-link. Residues 902-911 (PKTRESDHSR) show a composition bias toward basic and acidic residues. Over residues 932 to 941 (KVKMRRKRRL) the composition is skewed to basic residues. The span at 942–960 (PNKELSRELSKELNHEIQR) shows a compositional bias: basic and acidic residues. A coiled-coil region spans residues 943-971 (NKELSRELSKELNHEIQRTENSLANENQQ). The residue at position 951 (serine 951) is a Phosphoserine. Polar residues predominate over residues 961–971 (TENSLANENQQ). A phosphoserine mark is found at serine 975, serine 979, serine 1018, and serine 1031. The segment covering 1014–1024 (PSLRSPPRVIS) has biased composition (low complexity). Residues 1059 to 1105 (DGAAHVMHREVWMAVFSYLSHQDLCVCMRVCRTWNRWCCDKRLWTRI) form the F-box domain. 7 LRR repeats span residues 1093 to 1120 (NRWC…MLSG), 1133 to 1154 (WTNI…LRDL), 1156 to 1182 (LSGC…DVQW), 1222 to 1247 (GLDI…HLSY), 1248 to 1277 (CNHV…NLSD), 1278 to 1302 (CNKV…DLRY), and 1303 to 1336 (CKQV…QKLS).

It belongs to the JHDM1 histone demethylase family. Interacts with SKP1, forming heterodimers. The heterodimeric KDM2B-SKP1 complex interacts with the PCGF1-BCORL1 heterodimeric complex to form a homotetrameric polycomb repression complex 1 (PRC1.1). Directly interacts with CUL1. The SKP1-KDM2B complex interacts with UBB. It depends on Fe(2+) as a cofactor.

The protein resides in the nucleus. The protein localises to the nucleolus. It is found in the chromosome. It catalyses the reaction N(6),N(6)-dimethyl-L-lysyl(36)-[histone H3] + 2 2-oxoglutarate + 2 O2 = L-lysyl(36)-[histone H3] + 2 formaldehyde + 2 succinate + 2 CO2. With respect to regulation, histone demethylase activity is inhibited by fumarate. Histone demethylase that demethylates 'Lys-4' and 'Lys-36' of histone H3, thereby playing a central role in histone code. Preferentially demethylates trimethylated H3 'Lys-4' and dimethylated H3 'Lys-36' residue while it has weak or no activity for mono- and tri-methylated H3 'Lys-36'. Preferentially binds the transcribed region of ribosomal RNA and represses the transcription of ribosomal RNA genes which inhibits cell growth and proliferation. May also serve as a substrate-recognition component of the SCF (SKP1-CUL1-F-box protein)-type E3 ubiquitin ligase complex. The protein is Lysine-specific demethylase 2B (KDM2B) of Homo sapiens (Human).